A 224-amino-acid chain; its full sequence is Pro-thyrotropin-releasing hormone-B (224 aa).

The first 15 residues, 1–15 (MMFLWWLLLLGTAIS), serve as a signal peptide directing secretion. The residue at position 75 (Gln75) is a Pyrrolidone carboxylic acid. A Proline amide modification is found at Pro77. Residues 86-101 (EKRQHPGKRDLEDLQL) are compositionally biased toward basic and acidic residues. Disordered regions lie at residues 86 to 131 (EKRQ…DWSR) and 150 to 212 (RQHP…NSGN). Pyrrolidone carboxylic acid is present on Gln89. Pro91 is subject to Proline amide. Gln105 is subject to Pyrrolidone carboxylic acid. Pro107 is subject to Proline amide. Basic and acidic residues predominate over residues 110-129 (RYLEDMEKRQHPGKREEGDW). Gln119 bears the Pyrrolidone carboxylic acid mark. A Proline amide modification is found at Pro121. Gln151 is modified (pyrrolidone carboxylic acid). Pro153 carries the proline amide modification. Pyrrolidone carboxylic acid is present on Gln166. Residue Pro168 is modified to Proline amide. Residues 182–199 (ENSKEVGKRQHPGKRYDP) show a composition bias toward basic and acidic residues. At Gln191 the chain carries Pyrrolidone carboxylic acid. Proline amide is present on Pro193.

The protein belongs to the TRH family.

The protein resides in the secreted. This Xenopus laevis (African clawed frog) protein is Pro-thyrotropin-releasing hormone-B (trh-b).